Here is a 338-residue protein sequence, read N- to C-terminus: MESRQDITNQEELWKMKPRKNLEDDYLNEDSRENSMPKRPMLVHLHQTAHFDEFDCPPELQHKQELFPKWHLPIKIAAIVSSLTFLYTLLREVIHPFVTSHQQYFYKIPILVINKVLPMVSITLLALVYLPGVIAAIVQLHNGTKYKKFPHWLDRWMVTRKQFGLLSFFFAVLHAVYSLSYPMRRSYRYKLLNWAYQQVQQNKEDAWIEHDVWRMEIYVSLGIVTLAILALLAVTSIPSVSDSLTWREFHYIQSTLGIVSLLLGTIHALIFAWNKWVDIKQFIWYTPPTFMIAVFLPTVVLICKVILLLPCLRRKILKIRHGWEDVTKINKTEMSSQL.

2 consecutive transmembrane segments (helical) span residues 70–90 (WHLP…YTLL) and 118–138 (PMVS…AAIV). In terms of domain architecture, Ferric oxidoreductase spans 117–264 (LPMVSITLLA…TLGIVSLLLG (148 aa)). Gln-139 and Arg-160 together coordinate FAD. 4 helical membrane passes run 163-183 (FGLL…SYPM), 217-237 (IYVS…VTSI), 252-272 (IQST…LIFA), and 290-310 (FMIA…LLLP). His-174 contributes to the heme b binding site. 2 residues coordinate FAD: Ser-236 and Gln-253. His-267 serves as a coordination point for heme b.

It belongs to the STEAP family. As to quaternary structure, homotrimer. FAD is required as a cofactor. Requires heme b as cofactor.

Its subcellular location is the endosome membrane. The protein localises to the cell membrane. Its function is as follows. Does not function as a metalloreductase due to the absence of binding sites for the electron-donating substrate NADPH. The protein is STEAP1 protein (STEAP1) of Sus scrofa (Pig).